A 116-amino-acid polypeptide reads, in one-letter code: uncharacterized protein (116 aa).

The next 2 membrane-spanning stretches (helical) occupy residues 40–60 (AIVK…IGIL) and 72–92 (FLGS…VVPI).

Its subcellular location is the membrane. This is an uncharacterized protein from Saccharomyces cerevisiae (strain ATCC 204508 / S288c) (Baker's yeast).